A 67-amino-acid chain; its full sequence is Prokaryotic ubiquitin-like protein Pup (67 aa).

The segment at 1-36 is disordered; the sequence is MPQQFEQPQAQQAATQEDDALATTQAAAQTESADQA. Residues 23–61 form an ARC ATPase binding region; it reads TTQAAAQTESADQADVLDDILDDIESTLETNAEEYVNSF. Glu67 is covalently cross-linked (Isoglutamyl lysine isopeptide (Glu-Lys) (interchain with K-? in acceptor proteins)).

This sequence belongs to the prokaryotic ubiquitin-like protein family. In terms of assembly, strongly interacts with the proteasome-associated ATPase ARC through a hydrophobic interface; the interacting region of Pup lies in its C-terminal half. There is one Pup binding site per ARC hexamer ring.

It functions in the pathway protein degradation; proteasomal Pup-dependent pathway. Protein modifier that is covalently attached to lysine residues of substrate proteins, thereby targeting them for proteasomal degradation. The tagging system is termed pupylation. In Bifidobacterium longum (strain DJO10A), this protein is Prokaryotic ubiquitin-like protein Pup.